Reading from the N-terminus, the 103-residue chain is MNTQSIGAKGKSKAAKGIAKRHRKQSSLSDSISKPAIRRIARRAGVRRVGGGCFKEINNAAREYIRDTLSIACIYATHAKRKTITCSDILHSLKRMGIKYIGY.

Residues 1–32 (MNTQSIGAKGKSKAAKGIAKRHRKQSSLSDSI) form a disordered region. Residues 10–25 (GKSKAAKGIAKRHRKQ) are compositionally biased toward basic residues. Lys16 carries the post-translational modification N6-acetyl-N6-methyllysine; alternate. Lys16 bears the N6-methyllysine; alternate mark. Residues 20 to 24 (KRHRK) mediate DNA binding. Lys94 is subject to N6-glutaryllysine.

This sequence belongs to the histone H4 family. As to quaternary structure, the nucleosome is a histone octamer containing two molecules each of H2A, H2B, H3 and H4 assembled in one H3-H4 heterotetramer and two H2A-H2B heterodimers. The octamer wraps approximately 147 bp of DNA. Glutarylation at Lys-94 (H4K91glu) destabilizes nucleosomes by promoting dissociation of the H2A-H2B dimers from nucleosomes.

It localises to the nucleus. The protein localises to the chromosome. In terms of biological role, core component of nucleosome. Nucleosomes wrap and compact DNA into chromatin, limiting DNA accessibility to the cellular machineries which require DNA as a template. Histones thereby play a central role in transcription regulation, DNA repair, DNA replication and chromosomal stability. DNA accessibility is regulated via a complex set of post-translational modifications of histones, also called histone code, and nucleosome remodeling. This chain is Histone H4 (HHF1), found in Encephalitozoon cuniculi (strain GB-M1) (Microsporidian parasite).